Reading from the N-terminus, the 129-residue chain is Large ribosomal subunit protein bL17 (129 aa).

The protein belongs to the bacterial ribosomal protein bL17 family. As to quaternary structure, part of the 50S ribosomal subunit. Contacts protein L32.

This is Large ribosomal subunit protein bL17 from Actinobacillus succinogenes (strain ATCC 55618 / DSM 22257 / CCUG 43843 / 130Z).